The sequence spans 103 residues: Putative defensin-like protein 305 (103 aa).

Residues 1–31 form the signal peptide; the sequence is MREEILEIFLLVNFVFILCTSIMVRIRYVSC. 3 disulfide bridges follow: Cys-31/Cys-51, Cys-37/Cys-56, and Cys-42/Cys-58.

Belongs to the DEFL family.

Its subcellular location is the secreted. The chain is Putative defensin-like protein 305 from Arabidopsis thaliana (Mouse-ear cress).